Here is a 236-residue protein sequence, read N- to C-terminus: MVSMTTSSSSYGTFSTVVNSSRPNSSATFLVPSLKFSTGISNFANLSNGFSLKSPINPGFLFKSRPFTVQARAAAEKTVHDFTVKDIDGKDVALNKFKGKVMLIVNVASRCGLTSSNYSELSHLYEKYKTQGFEILAFPCNQFGFQEPGSNSEIKQFACTRFKAEFPIFDKVDVNGPSTAPIYEFLKSNAGGFLGGLIKWNFEKFLIDKKGKVVERYPPTTSPFQIEKDIQKLLAA.

Residues 1 to 16 are compositionally biased toward low complexity; it reads MVSMTTSSSSYGTFST. The segment at 1 to 24 is disordered; sequence MVSMTTSSSSYGTFSTVVNSSRPN. The transit peptide at 1–64 directs the protein to the chloroplast; it reads MVSMTTSSSS…PINPGFLFKS (64 aa). The active site involves Cys-111.

The protein belongs to the glutathione peroxidase family. Expressed in leaves, stems, flowers, green siliques and seeds.

The protein localises to the plastid. It is found in the chloroplast. It catalyses the reaction a hydroperoxy polyunsaturated fatty acid + 2 glutathione = a hydroxy polyunsaturated fatty acid + glutathione disulfide + H2O. Its function is as follows. Protects cells and enzymes from oxidative damage, by catalyzing the reduction of hydrogen peroxide, lipid peroxides and organic hydroperoxide, by glutathione. The polypeptide is Phospholipid hydroperoxide glutathione peroxidase 1, chloroplastic (GPX1) (Arabidopsis thaliana (Mouse-ear cress)).